The primary structure comprises 163 residues: Nucleotide-binding protein BLi01194 (163 aa).

It belongs to the YajQ family.

Functionally, nucleotide-binding protein. In Bacillus licheniformis (strain ATCC 14580 / DSM 13 / JCM 2505 / CCUG 7422 / NBRC 12200 / NCIMB 9375 / NCTC 10341 / NRRL NRS-1264 / Gibson 46), this protein is Nucleotide-binding protein BLi01194.